Consider the following 233-residue polypeptide: Movement and silencing protein TGBp1 (233 aa).

The region spanning 1-133 (MNHFINLLVA…CKLLSSLGIK (133 aa)) is the (+)RNA virus helicase ATP-binding domain. In terms of domain architecture, (+)RNA virus helicase C-terminal spans 134–233 (VESHRRDRDV…EFPHTTSRPQ (100 aa)).

The protein belongs to the Tymovirales TGBp1 protein family. Homodimer and homooligomer. Interacts with capsid protein. Interacts with host AGO1; this interaction targets the host protein for degradation, thereby suppressing the antiviral RNA silencing.

It localises to the host cytoplasm. Transports viral genome to neighboring plant cells directly through plasmosdesmata, without any budding. The movement protein allows efficient cell to cell propagation, by bypassing the host cell wall barrier. Increases plasmodesma size exclusion limit. Acts as a suppressor of RNA-mediated gene silencing, also known as post-transcriptional gene silencing (PTGS), a mechanism of plant viral defense that limits the accumulation of viral RNAs. The polypeptide is Movement and silencing protein TGBp1 (Carica papaya (Papaya)).